The primary structure comprises 1400 residues: Bromodomain-containing protein 4 (1400 aa).

A disordered region spans residues 1–58 (MSTESGPGTRLRNLPVMGDGLETSQMSTTQAQAQPQPANAASTNPPPPETSNPNKPKR). Over residues 23–43 (TSQMSTTQAQAQPQPANAAST) the composition is skewed to low complexity. The 107-residue stretch at 58–164 (RQTNQLQYLL…KLFLQKINEL (107 aa)) folds into the Bromo 1 domain. Residue Lys99 forms a Glycyl lysine isopeptide (Lys-Gly) (interchain with G-Cter in SUMO2) linkage. Disordered regions lie at residues 176-353 (AKGR…KISE) and 461-616 (EPEE…YEEK). The segment covering 197–212 (PNTTQASTSPQTQTPQ) has biased composition (low complexity). The segment covering 244–267 (PPQPLQTPSPVPPQPPPPPAPVPQ) has biased composition (pro residues). The span at 321 to 337 (PRRESSRPVKPPKKDVP) shows a compositional bias: basic and acidic residues. The region spanning 349 to 458 (SKISEQLKCC…DVFEMRFAKM (110 aa)) is the Bromo 2 domain. Residue Ser471 is modified to Phosphoserine. Positions 479-498 (KVVAPPSSSDSSSDSSSDSD) are enriched in low complexity. Residues Ser485, Ser489, and Ser493 each carry the phosphoserine; by CK2 modification. The NPS region stretch occupies residues 485 to 504 (SSSDSSSDSSSDSDSSTDDS). Ser495 bears the Phosphoserine mark. Phosphoserine; by CK2 is present on residues Ser499, Ser500, and Ser504. Residues 525 to 580 (QLAALSQPQQNKPKKKEKDKKEKKKEKHKKKEEVEENKKSKTKELPPKKTKKNNSS) form a BID region region. The segment covering 536–554 (KPKKKEKDKKEKKKEKHKK) has biased composition (basic residues). Over residues 555 to 571 (KEEVEENKKSKTKELPP) the composition is skewed to basic and acidic residues. Residue Lys586 forms a Glycyl lysine isopeptide (Lys-Gly) (interchain with G-Cter in SUMO2) linkage. Residues 601-683 (ESEEEDKCKP…SCLRKKRKPQ (83 aa)) enclose the NET domain. Phosphoserine is present on Ser602. Basic and acidic residues predominate over residues 606–616 (DKCKPMSYEEK). Residues Lys646 and Lys695 each participate in a glycyl lysine isopeptide (Lys-Gly) (interchain with G-Cter in SUMO2) cross-link. The interval 675 to 1125 (CLRKKRKPQA…GCPPASPAAV (451 aa)) is disordered. Over residues 700–713 (SSSESESTSESSSS) the composition is skewed to low complexity. The span at 725–745 (KSKKKGHTGRDQKKHHHHHHP) shows a compositional bias: basic residues. 4 stretches are compositionally biased toward pro residues: residues 748–787 (QPAP…PPSM), 835–848 (PELP…PEHS), 883–892 (PPKPTRPPAV), and 900–909 (PLLPQPPMAQ). The span at 928–938 (MQMQLYLQQLQ) shows a compositional bias: low complexity. Pro residues-rich tracts occupy residues 955–966 (QPPPPLPPPPHP), 975–1000 (PQPP…PRPV), and 1013–1037 (QPPP…PQPA). Residues 1050–1400 (RHHKSDPYSA…LLSIFEENLF (351 aa)) are C-terminal (CTD) region. Lys1053 participates in a covalent cross-link: Glycyl lysine isopeptide (Lys-Gly) (interchain with G-Cter in SUMO2). Positions 1075-1084 (QMPQFQSLTH) are enriched in polar residues. Over residues 1085-1095 (QSPPQQNVQPK) the composition is skewed to low complexity. Position 1147 is an N6-acetyllysine; alternate (Lys1147). Lys1147 participates in a covalent cross-link: Glycyl lysine isopeptide (Lys-Gly) (interchain with G-Cter in SUMO1); alternate. Lys1147 participates in a covalent cross-link: Glycyl lysine isopeptide (Lys-Gly) (interchain with G-Cter in SUMO2); alternate. Phosphoserine is present on residues Ser1153 and Ser1162. Residues 1155 to 1377 (IIRSEPFSTS…KREQERRRRE (223 aa)) form a disordered region. Residues 1211–1232 (PDKDKQKQEPKTPVAPKKDLKI) are compositionally biased toward basic and acidic residues. A Glycyl lysine isopeptide (Lys-Gly) (interchain with G-Cter in SUMO2) cross-link involves residue Lys1233. Phosphoserine is present on residues Ser1237 and Ser1240. Low complexity predominate over residues 1247-1258 (TTPSSTAKSSSD). Over residues 1259–1320 (SFEHFRRAAR…AHEEARRRQE (62 aa)) the composition is skewed to basic and acidic residues. Residues 1321 to 1357 (QQQQQQQQRQEQQQQQQQAAAVAAASAPQAQSSQPQS) show a composition bias toward low complexity. Basic and acidic residues predominate over residues 1361 to 1377 (QQRELARKREQERRRRE).

It belongs to the BET family. In terms of assembly, binds acetylated histone H4. Interacts with p53/TP53; the interaction is direct. Interacts (via CTD region) with CDK9 and CCNT1, acting as an associated component of P-TEFb complex. Interacts with RELA (when acetylated at 'Lys-310'). Interacts (via NET domain) with NSD3, CHD4, BICRA and ATAD5. The interaction with BICRA bridges BRD4 to the GBAF complex. Interacts (via NET domain) with JMJD6 (via JmjC and N-terminal domains); the interaction is stronger in presence of ssRNA and recruits JMJD6 on distal enhancers. Interacts with NSD3. Interacts with NIPBL. Phosphorylation by CK2 disrupt the intramolecular binding between the bromo domain 2 and the NPS region and promotes binding between the NPS and the BID regions, leading to activate the protein and promote binding to acetylated histones. In absence of phosphorylation, BRD4 does not localize to p53/TP53 target gene promoters, phosphorylation promoting recruitment to p53/TP53 target promoters.

It is found in the nucleus. It localises to the chromosome. In terms of biological role, chromatin reader protein that recognizes and binds acetylated histones and plays a key role in transmission of epigenetic memory across cell divisions and transcription regulation. Remains associated with acetylated chromatin throughout the entire cell cycle and provides epigenetic memory for postmitotic G1 gene transcription by preserving acetylated chromatin status and maintaining high-order chromatin structure. During interphase, plays a key role in regulating the transcription of signal-inducible genes by associating with the P-TEFb complex and recruiting it to promoters. Also recruits P-TEFb complex to distal enhancers, so called anti-pause enhancers in collaboration with JMJD6. BRD4 and JMJD6 are required to form the transcriptionally active P-TEFb complex by displacing negative regulators such as HEXIM1 and 7SKsnRNA complex from P-TEFb, thereby transforming it into an active form that can then phosphorylate the C-terminal domain (CTD) of RNA polymerase II. Regulates differentiation of naive CD4(+) T-cells into T-helper Th17 by promoting recruitment of P-TEFb to promoters. Promotes phosphorylation of 'Ser-2' of the C-terminal domain (CTD) of RNA polymerase II. According to a report, directly acts as an atypical protein kinase and mediates phosphorylation of 'Ser-2' of the C-terminal domain (CTD) of RNA polymerase II; these data however need additional evidences in vivo. In addition to acetylated histones, also recognizes and binds acetylated RELA, leading to further recruitment of the P-TEFb complex and subsequent activation of NF-kappa-B. Also acts as a regulator of p53/TP53-mediated transcription: following phosphorylation by CK2, recruited to p53/TP53 specific target promoters. The protein is Bromodomain-containing protein 4 (Brd4) of Mus musculus (Mouse).